Reading from the N-terminus, the 460-residue chain is Putative glycoside/cation symporter YagG (460 aa).

At 1 to 9 (MTQLTMKDK) the chain is on the cytoplasmic side. Helical transmembrane passes span 10–30 (IGYG…MFLL) and 31–51 (AYFY…LFLV). The Cytoplasmic portion of the chain corresponds to 52-78 (SRVLDAVTDPLMGLLVDRTRTRHGQFR). A helical membrane pass occupies residues 79-99 (PFLLWGAIPFGIVCVLTFYTP). Over 100–106 (DFSAQGK) the chain is Periplasmic. Residues 107–127 (IIYACVTYILLTLVYTFVNVP) form a helical membrane-spanning segment. Residues 128–150 (YCAMPGVITADPKERHALQSWRF) lie on the Cytoplasmic side of the membrane. A helical membrane pass occupies residues 151–171 (FLAAAGSLAISGIALPLVSII). The Periplasmic segment spans residues 172 to 179 (GKGDEQVG). The chain crosses the membrane as a helical span at residues 180 to 200 (YFGAMCVLGLSGVVLLYVCFF). At 201–262 (TTKERYTFEV…FVKYVMDHPE (62 aa)) the chain is on the cytoplasmic side. Residues 263 to 283 (LATQFLLYGSLATMFGSLCSS) form a helical membrane-spanning segment. The Periplasmic segment spans residues 284–308 (RLLGRFDRVTAFKWIIVAYSLISLL). The chain crosses the membrane as a helical span at residues 309 to 329 (IFVTPAEHIALIFALNILFLF). The Cytoplasmic segment spans residues 330–366 (VFNTTTPLQWLMASDVVDYEESRSGRRLDGLVFSTYL). The chain crosses the membrane as a helical span at residues 367–387 (FSLKIGLAIGGAVVGWILAYV). At 388-405 (NYSASSSVQPVEVLTTIK) the chain is on the periplasmic side. Residues 406–426 (ILFCVVPVVLYAGMFIMLSLY) traverse the membrane as a helical segment. Over 427–460 (KLTDARVEAISRQLIKHRAAQGEAVPDAATAASH) the chain is Cytoplasmic.

The protein belongs to the sodium:galactoside symporter (TC 2.A.2) family.

The protein localises to the cell inner membrane. The polypeptide is Putative glycoside/cation symporter YagG (yagG) (Escherichia coli (strain K12)).